Consider the following 82-residue polypeptide: Cytochrome b559 subunit alpha (82 aa).

Residues 22–36 traverse the membrane as a helical segment; it reads IIHAVTLPAIFIAGF. H24 provides a ligand contact to heme.

Belongs to the PsbE/PsbF family. As to quaternary structure, heterodimer of an alpha subunit and a beta subunit. PSII is composed of 1 copy each of membrane proteins PsbA, PsbB, PsbC, PsbD, PsbE, PsbF, PsbH, PsbI, PsbJ, PsbK, PsbL, PsbM, PsbT, PsbX, PsbY, Psb30/Ycf12, peripheral proteins PsbO, CyanoQ (PsbQ), PsbU, PsbV and a large number of cofactors. It forms dimeric complexes. Heme b is required as a cofactor.

It is found in the cellular thylakoid membrane. In terms of biological role, this b-type cytochrome is tightly associated with the reaction center of photosystem II (PSII). PSII is a light-driven water:plastoquinone oxidoreductase that uses light energy to abstract electrons from H(2)O, generating O(2) and a proton gradient subsequently used for ATP formation. It consists of a core antenna complex that captures photons, and an electron transfer chain that converts photonic excitation into a charge separation. In Prochlorococcus marinus (strain MIT 9515), this protein is Cytochrome b559 subunit alpha.